The primary structure comprises 530 residues: RNA-binding protein 39 (530 aa).

Residues 1 to 146 are disordered; it reads MADDIDIEAM…PVREPIDNLT (146 aa). Ala2 is subject to N-acetylalanine. Positions 14-32 are enriched in basic and acidic residues; the sequence is PYKKDENKLNSANGHEERS. Composition is skewed to basic residues over residues 33–56 and 64–95; these read KKRK…KERK and KKSK…RGRY. Residue Tyr95 is modified to Phosphotyrosine. Phosphoserine is present on residues Ser97 and Ser100. Residue Lys111 forms a Glycyl lysine isopeptide (Lys-Gly) (interchain with G-Cter in SUMO2) linkage. At Ser117 the chain carries Phosphoserine. Residue Lys119 forms a Glycyl lysine isopeptide (Lys-Gly) (interchain with G-Cter in SUMO2) linkage. The span at 119–130 shows a compositional bias: basic residues; it reads KLSRRRSRSKSP. Phosphoserine is present on residues Ser121 and Ser136. Residues 131–146 show a composition bias toward basic and acidic residues; sequence FRKDKSPVREPIDNLT. Residue Thr146 is modified to Phosphothreonine. Residues 153 to 230 form the RRM 1 domain; the sequence is RTVFCMQLAA…VPIIVQASQA (78 aa). Lys244 is covalently cross-linked (Glycyl lysine isopeptide (Lys-Gly) (interchain with G-Cter in SUMO2)). The RRM 2 domain maps to 250–328; sequence MRLYVGSLHF…RPMKVGHVTE (79 aa). The interval 291–355 is activating domain; sequence KGYGFITFSD…RTGIDLGTTG (65 aa). The tract at residues 291–406 is interaction with JUN; sequence KGYGFITFSD…IDLQTRLSQQ (116 aa). A phosphoserine mark is found at Ser334, Ser337, and Ser341. Positions 355–406 are interaction with ESR1 and ESR2; it reads GRLQLMARLAEGTGLQIPPAAQQALQMSGSLAFGAVAEFSFVIDLQTRLSQQ. An interaction with NCOA6 region spans residues 406–530; the sequence is QTEASALAAA…ATQLLVPSRR (125 aa). One can recognise an RRM 3 domain in the interval 445 to 508; the sequence is EIKDDVIEEC…KMITAAYVPL (64 aa).

Belongs to the splicing factor SR family. In terms of assembly, interacts with NCOA6 and JUN. Interacts with ESR1 and ESR2, in the presence of estradiol (E2). Interacts with RSRC1 (via Arg/Ser-rich domain). Interacts with SF3B1. Interacts with ZNF106 (via N-terminus).

Its subcellular location is the nucleus. RNA-binding protein that acts as a pre-mRNA splicing factor. Acts by promoting exon inclusion via regulation of exon cassette splicing. Also acts as a transcriptional coactivator for steroid nuclear receptors ESR1/ER-alpha and ESR2/ER-beta, and JUN/AP-1, independently of the pre-mRNA splicing factor activity. The sequence is that of RNA-binding protein 39 (Rbm39) from Mus musculus (Mouse).